We begin with the raw amino-acid sequence, 286 residues long: Phosphoribosylaminoimidazole-succinocarboxamide synthase (286 aa).

The protein belongs to the SAICAR synthetase family.

It carries out the reaction 5-amino-1-(5-phospho-D-ribosyl)imidazole-4-carboxylate + L-aspartate + ATP = (2S)-2-[5-amino-1-(5-phospho-beta-D-ribosyl)imidazole-4-carboxamido]succinate + ADP + phosphate + 2 H(+). It participates in purine metabolism; IMP biosynthesis via de novo pathway; 5-amino-1-(5-phospho-D-ribosyl)imidazole-4-carboxamide from 5-amino-1-(5-phospho-D-ribosyl)imidazole-4-carboxylate: step 1/2. In Pasteurella multocida (strain Pm70), this protein is Phosphoribosylaminoimidazole-succinocarboxamide synthase (purC).